We begin with the raw amino-acid sequence, 541 residues long: Sorting nexin-27 (541 aa).

The tract at residues 1-42 (MADEDGEGIHPSAPHRNGGGGGGGGSGLHCAGNGGGGGGGPR) is disordered. Positions 17-41 (NGGGGGGGGSGLHCAGNGGGGGGGP) are enriched in gly residues. Residues 43 to 136 (VVRIVKSESG…ELILTVLSVP (94 aa)) form the PDZ domain. Phosphoserine is present on residues S51 and S62. The PX domain occupies 161 to 269 (QAVPISVPRY…EFLSESDENY (109 aa)). Positions 273–362 (SDVELRVALP…TCLTIRKWLF (90 aa)) constitute a Ras-associating domain. The interval 273–362 (SDVELRVALP…TCLTIRKWLF (90 aa)) is FERM-like region F1. The FERM-like region F2 stretch occupies residues 373-421 (NDLAVTYFFHQAVDDVKKGYIKAEEKSYQLQKLYEQRKMVMYLNMLRTC). Positions 425–525 (NEIIFPHCAC…RVFCELKWRK (101 aa)) are FERM-like region F3.

The protein belongs to the sorting nexin family. As to quaternary structure, core component of the SNX27-retromer, a multiprotein complex composed of SNX27, the WASH complex and the retromer complex. Interacts (via PDZ domain) with a number of target transmembrane proteins (via PDZ-binding motif): ABCC4, ADRB2, ARHGEF7, GRIA1, GRIA2, GRIN1, GRIN2A GRIN2C, KCNJ6, KCNJ9 and SLC2A1/GLUT1. Interacts (via the FERM-like regions) with the WASH complex. Interacts with SNX1. Interacts with CYTIP. Isoform 1 and isoform 2 directly interact with DGKZ. Isoform 1 and isoform 2 interact with HT4R isoform 5-HTA(A). Interacts with MCC. Interacts (via PDZ domains) with SLC9A3; directs SLC9A3 membrane insertion from early endosomes to the plasma membrane. As to expression, widely expressed. Expressed in cells of hematopoietic origin (at protein level).

Its subcellular location is the early endosome membrane. It localises to the cytoplasm. It is found in the cytosol. Its function is as follows. Involved in the retrograde transport from endosome to plasma membrane, a trafficking pathway that promotes the recycling of internalized transmembrane proteins. Following internalization, endocytosed transmembrane proteins are delivered to early endosomes and recycled to the plasma membrane instead of being degraded in lysosomes. SNX27 specifically binds and directs sorting of a subset of transmembrane proteins containing a PDZ-binding motif at the C-terminus: following interaction with target transmembrane proteins, associates with the retromer complex, preventing entry into the lysosomal pathway, and promotes retromer-tubule based plasma membrane recycling. SNX27 also binds with the WASH complex. Interacts with membranes containing phosphatidylinositol-3-phosphate (PtdIns(3P)). May participate in establishment of natural killer cell polarity. Recruits CYTIP to early endosomes. The sequence is that of Sorting nexin-27 (SNX27) from Homo sapiens (Human).